The chain runs to 274 residues: Diaminopimelate epimerase (274 aa).

Positions 11, 44, and 64 each coordinate substrate. Cys-73 (proton donor) is an active-site residue. Residues 74-75, Asn-157, Asn-190, and 208-209 each bind substrate; these read GN and ER. The active-site Proton acceptor is Cys-217. 218–219 provides a ligand contact to substrate; it reads GS.

Belongs to the diaminopimelate epimerase family. Homodimer.

The protein localises to the cytoplasm. It carries out the reaction (2S,6S)-2,6-diaminopimelate = meso-2,6-diaminopimelate. Its pathway is amino-acid biosynthesis; L-lysine biosynthesis via DAP pathway; DL-2,6-diaminopimelate from LL-2,6-diaminopimelate: step 1/1. In terms of biological role, catalyzes the stereoinversion of LL-2,6-diaminopimelate (L,L-DAP) to meso-diaminopimelate (meso-DAP), a precursor of L-lysine and an essential component of the bacterial peptidoglycan. This is Diaminopimelate epimerase from Pasteurella multocida (strain Pm70).